A 178-amino-acid polypeptide reads, in one-letter code: Large ribosomal subunit protein uL10 (178 aa).

Belongs to the universal ribosomal protein uL10 family. As to quaternary structure, part of the ribosomal stalk of the 50S ribosomal subunit. The N-terminus interacts with L11 and the large rRNA to form the base of the stalk. The C-terminus forms an elongated spine to which L12 dimers bind in a sequential fashion forming a multimeric L10(L12)X complex.

Its function is as follows. Forms part of the ribosomal stalk, playing a central role in the interaction of the ribosome with GTP-bound translation factors. The polypeptide is Large ribosomal subunit protein uL10 (Leuconostoc mesenteroides subsp. mesenteroides (strain ATCC 8293 / DSM 20343 / BCRC 11652 / CCM 1803 / JCM 6124 / NCDO 523 / NBRC 100496 / NCIMB 8023 / NCTC 12954 / NRRL B-1118 / 37Y)).